Here is a 376-residue protein sequence, read N- to C-terminus: Chaperone protein DnaJ (376 aa).

The 65-residue stretch at 4–68 folds into the J domain; that stretch reads DYYQLLGVAR…ETRARYDQFG (65 aa). The segment at 135-217 adopts a CR-type zinc-finger fold; the sequence is GGEKEIRVTH…CGGAGRLRRP (83 aa). The Zn(2+) site is built by Cys-148, Cys-151, Cys-165, Cys-168, Cys-191, Cys-194, Cys-205, and Cys-208. CXXCXGXG motif repeat units lie at residues 148–155, 165–172, 191–198, and 205–212; these read CGTCQGSG, CTTCGGAG, CPTCEGSG, and CDDCGGAG.

Belongs to the DnaJ family. Homodimer. The cofactor is Zn(2+).

The protein resides in the cytoplasm. Its function is as follows. Participates actively in the response to hyperosmotic and heat shock by preventing the aggregation of stress-denatured proteins and by disaggregating proteins, also in an autonomous, DnaK-independent fashion. Unfolded proteins bind initially to DnaJ; upon interaction with the DnaJ-bound protein, DnaK hydrolyzes its bound ATP, resulting in the formation of a stable complex. GrpE releases ADP from DnaK; ATP binding to DnaK triggers the release of the substrate protein, thus completing the reaction cycle. Several rounds of ATP-dependent interactions between DnaJ, DnaK and GrpE are required for fully efficient folding. Also involved, together with DnaK and GrpE, in the DNA replication of plasmids through activation of initiation proteins. In Synechococcus sp. (strain ATCC 27144 / PCC 6301 / SAUG 1402/1) (Anacystis nidulans), this protein is Chaperone protein DnaJ.